The sequence spans 141 residues: Large ribosomal subunit protein uL11B (141 aa).

The protein belongs to the universal ribosomal protein uL11 family. In terms of assembly, part of the ribosomal stalk of the 50S ribosomal subunit. Interacts with L10 and the large rRNA to form the base of the stalk. L10 forms an elongated spine to which L12 dimers bind in a sequential fashion forming a multimeric L10(L12)X complex. Post-translationally, one or more lysine residues are methylated.

Its function is as follows. Forms part of the ribosomal stalk which helps the ribosome interact with GTP-bound translation factors. The chain is Large ribosomal subunit protein uL11B from Halalkalibacterium halodurans (strain ATCC BAA-125 / DSM 18197 / FERM 7344 / JCM 9153 / C-125) (Bacillus halodurans).